A 286-amino-acid polypeptide reads, in one-letter code: Serine carboxypeptidase-like (286 aa).

Ser4 is a catalytic residue. Disulfide bonds link Cys83-Cys98 and Cys121-Cys126. Asp193 is a catalytic residue. Residue Cys196 coordinates substrate. Asn227 carries N-linked (GlcNAc...) asparagine glycosylation. His250 is a catalytic residue.

This sequence belongs to the peptidase S10 family.

Involved in degradation of small peptides. The sequence is that of Serine carboxypeptidase-like from Pisum sativum (Garden pea).